Reading from the N-terminus, the 190-residue chain is Lipid A acyltransferase PagP (190 aa).

The N-terminal stretch at 1-18 (MKRLISCLTIICALNASA) is a signal peptide. Catalysis depends on residues His-60, Asp-103, and Ser-104.

It belongs to the lipid A palmitoyltransferase family. Homodimer.

It is found in the cell outer membrane. It carries out the reaction a lipid A + a 1,2-diacyl-sn-glycero-3-phosphocholine = a hepta-acyl lipid A + a 2-acyl-sn-glycero-3-phosphocholine. The enzyme catalyses a lipid IVA + a 1,2-diacyl-sn-glycero-3-phosphocholine = a lipid IVB + a 2-acyl-sn-glycero-3-phosphocholine. It catalyses the reaction a lipid IIA + a 1,2-diacyl-sn-glycero-3-phosphocholine = a lipid IIB + a 2-acyl-sn-glycero-3-phosphocholine. Transfers a fatty acid residue from the sn-1 position of a phospholipid to the N-linked hydroxyfatty acid chain on the proximal unit of lipid A or its precursors. This chain is Lipid A acyltransferase PagP, found in Legionella pneumophila (strain Paris).